A 68-amino-acid chain; its full sequence is Non-disulfide-bridged peptide 5.6 (68 aa).

The first 23 residues, Met1–Ala23, serve as a signal peptide directing secretion. The propeptide occupies Glu37–Lys68.

Belongs to the non-disulfide-bridged peptide (NDBP) superfamily. Short antimicrobial peptide (group 4) family. In terms of tissue distribution, expressed by the venom gland.

It localises to the secreted. It is found in the target cell membrane. In terms of biological role, antibacterial peptide with activity against both Gram-positive and Gram-negative bacteria probably by forming pores in the cell membrane. Also has weak hemolytic activity. Does not show antifungal activity. The chain is Non-disulfide-bridged peptide 5.6 from Hoffmannihadrurus gertschi (Scorpion).